Consider the following 375-residue polypeptide: Squamosa promoter-binding-like protein 9 (375 aa).

2 disordered regions span residues 1–30 and 43–73; these read MEMGSNSGPGHGPGQAESGGSSTESSSFSG and GGGGSGSSSSGGRSNRRVRGGGSGQSGQIPR. The segment covering 18–30 has biased composition (low complexity); the sequence is SGGSSTESSSFSG. The segment at 71 to 148 adopts an SBP-type zinc-finger fold; the sequence is IPRCQVEGCG…AGHNERRRKP (78 aa). Cysteine 74, cysteine 79, cysteine 96, histidine 99, cysteine 115, cysteine 118, histidine 122, and cysteine 134 together coordinate Zn(2+). A Bipartite nuclear localization signal motif is present at residues 131–147; it reads KRSCRRRLAGHNERRRK. Disordered stretches follow at residues 252-278 and 345-375; these read LLSNPHQPHDNNNNNNNNNNNNNNTWR and SDHHHQSRRQYMEDENTRAYDSSSHHTNWSL. Positions 262–275 are enriched in low complexity; the sequence is NNNNNNNNNNNNNN. Positions 345–362 are enriched in basic and acidic residues; the sequence is SDHHHQSRRQYMEDENTR. Residues 363-375 show a composition bias toward polar residues; that stretch reads AYDSSSHHTNWSL.

Zn(2+) serves as cofactor.

Its subcellular location is the nucleus. It is found in the cytoplasm. Its function is as follows. Trans-acting factor that binds specifically to the consensus nucleotide sequence 5'-TNCGTACAA-3'. The polypeptide is Squamosa promoter-binding-like protein 9 (SPL9) (Arabidopsis thaliana (Mouse-ear cress)).